The following is a 451-amino-acid chain: Serine--tRNA ligase (451 aa).

Residue 247–249 (TAE) participates in L-serine binding. ATP is bound by residues 278–280 (RKE) and V294. E301 contacts L-serine. Residue 365–368 (ELAS) coordinates ATP. Residue T400 coordinates L-serine.

The protein belongs to the class-II aminoacyl-tRNA synthetase family. Type-1 seryl-tRNA synthetase subfamily. As to quaternary structure, homodimer. The tRNA molecule binds across the dimer.

It is found in the cytoplasm. The enzyme catalyses tRNA(Ser) + L-serine + ATP = L-seryl-tRNA(Ser) + AMP + diphosphate + H(+). The catalysed reaction is tRNA(Sec) + L-serine + ATP = L-seryl-tRNA(Sec) + AMP + diphosphate + H(+). The protein operates within aminoacyl-tRNA biosynthesis; selenocysteinyl-tRNA(Sec) biosynthesis; L-seryl-tRNA(Sec) from L-serine and tRNA(Sec): step 1/1. Functionally, catalyzes the attachment of serine to tRNA(Ser). Is also able to aminoacylate tRNA(Sec) with serine, to form the misacylated tRNA L-seryl-tRNA(Sec), which will be further converted into selenocysteinyl-tRNA(Sec). The chain is Serine--tRNA ligase from Pyrobaculum aerophilum (strain ATCC 51768 / DSM 7523 / JCM 9630 / CIP 104966 / NBRC 100827 / IM2).